The primary structure comprises 401 residues: Nicotinate phosphoribosyltransferase (401 aa).

His-221 carries the post-translational modification Phosphohistidine; by autocatalysis.

The protein belongs to the NAPRTase family. Transiently phosphorylated on a His residue during the reaction cycle. Phosphorylation strongly increases the affinity for substrates and increases the rate of nicotinate D-ribonucleotide production. Dephosphorylation regenerates the low-affinity form of the enzyme, leading to product release.

It catalyses the reaction nicotinate + 5-phospho-alpha-D-ribose 1-diphosphate + ATP + H2O = nicotinate beta-D-ribonucleotide + ADP + phosphate + diphosphate. Its pathway is cofactor biosynthesis; NAD(+) biosynthesis; nicotinate D-ribonucleotide from nicotinate: step 1/1. Functionally, catalyzes the synthesis of beta-nicotinate D-ribonucleotide from nicotinate and 5-phospho-D-ribose 1-phosphate at the expense of ATP. This chain is Nicotinate phosphoribosyltransferase, found in Yersinia enterocolitica serotype O:8 / biotype 1B (strain NCTC 13174 / 8081).